Here is a 204-residue protein sequence, read N- to C-terminus: Large ribosomal subunit protein uL4 (204 aa).

A disordered region spans residues 56–79; the sequence is VSGTTAKPYGQKRTGRARQGSLRS.

The protein belongs to the universal ribosomal protein uL4 family. As to quaternary structure, part of the 50S ribosomal subunit.

One of the primary rRNA binding proteins, this protein initially binds near the 5'-end of the 23S rRNA. It is important during the early stages of 50S assembly. It makes multiple contacts with different domains of the 23S rRNA in the assembled 50S subunit and ribosome. In terms of biological role, forms part of the polypeptide exit tunnel. This chain is Large ribosomal subunit protein uL4, found in Wolbachia pipientis subsp. Culex pipiens (strain wPip).